The sequence spans 363 residues: Protein-arginine kinase (363 aa).

A Phosphagen kinase C-terminal domain is found at 24–255; the sequence is IVLSSRIRLA…EQLIAQERAA (232 aa). ATP-binding positions include 27-31, His-92, Arg-126, 177-181, and 208-213; these read SSRIR, RASVM, and RGTYGE. The RDXXRA motif of the pArg binding pocket involved in allosteric regulation motif lies at 338-343; that stretch reads RDVRRA.

The protein belongs to the ATP:guanido phosphotransferase family. Homodimer. Dimerization is important for full catalytic activity.

It catalyses the reaction L-arginyl-[protein] + ATP = N(omega)-phospho-L-arginyl-[protein] + ADP + H(+). Its activity is regulated as follows. Appears to be allosterically activated by the binding of pArg-containing polypeptides to the pArg-binding pocket localized in the C-terminal domain of McsB. Catalyzes the specific phosphorylation of arginine residues in a large number of proteins. Is part of the bacterial stress response system, where it is involved in regulating the global heat shock repressor CtsR; phosphorylates arginine residues in the winged helix-turn-helix domain of CtsR, thereby preventing its binding to DNA and consequently inducing the expression of repressed genes. Protein arginine phosphorylation has a physiologically important role and is involved in the regulation of many critical cellular processes, such as protein homeostasis, motility, competence, and stringent and stress responses, by regulating gene expression and protein activity. Acts exclusively on Arg residues, since it cannot phosphorylate Tyr, Ser, Thr, His, Asp and Lys. Has no free arginine kinase activity. The sequence is that of Protein-arginine kinase from Geobacillus stearothermophilus (Bacillus stearothermophilus).